Here is a 255-residue protein sequence, read N- to C-terminus: EEF1A lysine methyltransferase 4 (255 aa).

The S-adenosyl-L-methionine site is built by Trp26 and Tyr30. A Phosphotyrosine modification is found at Tyr39. Residues Trp41, Gly66, 88–89, 113–114, and Lys130 contribute to the S-adenosyl-L-methionine site; these read DY and DV. The Required for methyltransferase activity signature appears at 129-134; it reads EKGTLD.

The protein belongs to the methyltransferase superfamily.

The enzyme catalyses L-lysyl-[protein] + S-adenosyl-L-methionine = N(6)-methyl-L-lysyl-[protein] + S-adenosyl-L-homocysteine + H(+). It catalyses the reaction N(6)-methyl-L-lysyl-[protein] + S-adenosyl-L-methionine = N(6),N(6)-dimethyl-L-lysyl-[protein] + S-adenosyl-L-homocysteine + H(+). It carries out the reaction N(6),N(6)-dimethyl-L-lysyl-[protein] + S-adenosyl-L-methionine = N(6),N(6),N(6)-trimethyl-L-lysyl-[protein] + S-adenosyl-L-homocysteine + H(+). Functionally, protein-lysine methyltransferase that efficiently catalyzes three successive methylations on 'Lys-36' in eukaryotic translation elongation factor 1 alpha (EEF1A1 or EEF1A2). The chain is EEF1A lysine methyltransferase 4 from Mus musculus (Mouse).